Consider the following 285-residue polypeptide: HTH-type transcriptional regulator MurR (285 aa).

An HTH rpiR-type domain is found at 1 to 77 (MLYLTKISNA…MALIGEYSAS (77 aa)). The H-T-H motif DNA-binding region spans 37–56 (SRQMAKQLGISQSSIVKFAQ). The SIS domain occupies 128-279 (IIEVISKAPF…SLKMIQRSSE (152 aa)).

Homotetramer.

It functions in the pathway amino-sugar metabolism; N-acetylmuramate degradation [regulation]. Functionally, represses the expression of the murPQ operon involved in the uptake and degradation of N-acetylmuramic acid (MurNAc). Binds to two adjacent inverted repeats within the operator region. MurNAc 6-phosphate, the substrate of MurQ, is the specific inducer that weakens binding of MurR to the operator. In Shigella boydii serotype 4 (strain Sb227), this protein is HTH-type transcriptional regulator MurR.